The chain runs to 40 residues: Large ribosomal subunit protein bL36 (40 aa).

Belongs to the bacterial ribosomal protein bL36 family.

The polypeptide is Large ribosomal subunit protein bL36 (Corynebacterium urealyticum (strain ATCC 43042 / DSM 7109)).